The chain runs to 428 residues: Adenylosuccinate synthetase (428 aa).

GTP contacts are provided by residues 12-18 and 40-42; these read GDEGKGK and GHT. Residue aspartate 13 is the Proton acceptor of the active site. Residues aspartate 13 and glycine 40 each coordinate Mg(2+). Residues 13–16, 38–41, threonine 129, arginine 143, glutamine 224, threonine 239, and arginine 303 each bind IMP; these read DEGK and NAGH. The active-site Proton donor is histidine 41. 299 to 305 contacts substrate; it reads VTTGRIR. Residues arginine 305, 331 to 333, and 410 to 412 each bind GTP; these read KVD and AYG.

Belongs to the adenylosuccinate synthetase family. As to quaternary structure, homodimer. Mg(2+) is required as a cofactor.

It localises to the cytoplasm. It catalyses the reaction IMP + L-aspartate + GTP = N(6)-(1,2-dicarboxyethyl)-AMP + GDP + phosphate + 2 H(+). It functions in the pathway purine metabolism; AMP biosynthesis via de novo pathway; AMP from IMP: step 1/2. Functionally, plays an important role in the de novo pathway of purine nucleotide biosynthesis. Catalyzes the first committed step in the biosynthesis of AMP from IMP. The protein is Adenylosuccinate synthetase of Francisella tularensis subsp. mediasiatica (strain FSC147).